The sequence spans 207 residues: MTARGRFITLEGVDGAGKSTHAAWLADALRDMGRTVVATREPGGTPLGETLRGLVLSESMTLDTETLLMFAARCEHLTQVIEPALARGDWVVCDRYTDATYAYQGGGRQLGADRIAVLEQWMRPALQPDRTWLFDVPLELARARLADARLPDRFEREEAAFFERTRAAYLARAQAHPGRIRIVDSSRPVTEVRAQLHAELQALAEMP.

ATP is bound at residue 12–19 (GVDGAGKS).

Belongs to the thymidylate kinase family.

The enzyme catalyses dTMP + ATP = dTDP + ADP. In terms of biological role, phosphorylation of dTMP to form dTDP in both de novo and salvage pathways of dTTP synthesis. This Bordetella petrii (strain ATCC BAA-461 / DSM 12804 / CCUG 43448) protein is Thymidylate kinase.